The following is a 424-amino-acid chain: Glutamate-1-semialdehyde 2,1-aminomutase (424 aa).

K266 carries the N6-(pyridoxal phosphate)lysine modification.

This sequence belongs to the class-III pyridoxal-phosphate-dependent aminotransferase family. HemL subfamily. Homodimer. Pyridoxal 5'-phosphate serves as cofactor.

Its subcellular location is the cytoplasm. The catalysed reaction is (S)-4-amino-5-oxopentanoate = 5-aminolevulinate. Its pathway is porphyrin-containing compound metabolism; protoporphyrin-IX biosynthesis; 5-aminolevulinate from L-glutamyl-tRNA(Glu): step 2/2. The protein is Glutamate-1-semialdehyde 2,1-aminomutase of Azoarcus sp. (strain BH72).